Consider the following 839-residue polypeptide: Autophagy-related protein 9A (839 aa).

The tract at residues 1–20 (MAQFDTEYQRLEASYSDSPP) is disordered. Ala-2 carries the N-acetylalanine modification. Residues 2–61 (AQFDTEYQRLEASYSDSPPGEEDLLVHVAEGSKSPWHHIENLDLFFSRVYNLHQKNGFTC) are Cytoplasmic-facing. A Tyrosine-based sorting signal motif is present at residues 8 to 11 (YQRL). Phosphoserine occurs at positions 14, 16, and 18. The helical transmembrane segment at 62 to 84 (MLIGEIFELMQFLFVVAFTTFLV) threads the bilayer. Over 85-128 (SCVDYDILFANKMVNHSLHPTEPVKVTLPDAFLPAQVCSARIQE) the chain is Lumenal. N-linked (GlcNAc...) asparagine glycosylation occurs at Asn-99. The chain crosses the membrane as a helical span at residues 129–154 (NGSLITILVIAGVFWIHRLIKFIYNI). Topologically, residues 155 to 290 (CCYWEIHSFY…ELAQRLSNRI (136 aa)) are cytoplasmic. An intramembrane segment occupies 291-301 (LWIGIANFLLC). Residues 302–319 (PLILIWQILYAFFSYAEV) lie on the Cytoplasmic side of the membrane. Residues 320-328 (LKREPGALG) lie within the membrane without spanning it. Residues 329–371 (ARCWSLYGRCYLRHFNELEHELQSRLNRGYKPASKYMNCFLSP) lie on the Cytoplasmic side of the membrane. A helical transmembrane segment spans residues 372–397 (LLTLLAKNGAFFAGSILAVLIALTIY). Residues 398-406 (DEDVLAVEH) lie on the Lumenal side of the membrane. The helical transmembrane segment at 407–424 (VLTTVTLLGVTVTVCRSF) threads the bilayer. Residues 425 to 470 (IPDQHMVFCPEQLLRVILAHIHYMPDHWQGNAHRSQTRDEFAQLFQ) lie on the Cytoplasmic side of the membrane. An intramembrane segment occupies 471–480 (YKAVFILEEL). Topologically, residues 481-483 (LSP) are cytoplasmic. Residues 484-492 (IVTPLILIF) lie within the membrane without spanning it. The Cytoplasmic segment spans residues 493–839 (CLRPRALEII…DELPPQVHKV (347 aa)). Phosphoserine is present on residues Ser-656, Ser-735, Ser-738, Ser-741, and Ser-828. Disordered regions lie at residues 656–686 (SPLQ…SSGS) and 717–839 (HKQQ…VHKV). The span at 724 to 736 (EPERHVWHRRESD) shows a compositional bias: basic and acidic residues. Composition is skewed to acidic residues over residues 737 to 747 (ESGESAPDEGG) and 823 to 832 (VPEEGSEDEL).

It belongs to the ATG9 family. Homotrimer; forms a homotrimer with a central pore that forms a path between the two membrane leaflets. Interacts (via cytoplasmic its C-terminus) with ATG2A. Interacts with SUPT20H. Interacts (via the tyrosine-based sorting signal motif) with AP4M1; promoting association with the AP-4 complex. Interacts with ARFIP1 and ARFIP2. Interacts with PI4K2A and PI4KB. Interacts with ATG4A; the interaction is direct and promotes ATG9A trafficking. Ufmylated in a DDRGK1 dependent manner.

Its subcellular location is the preautophagosomal structure membrane. The protein resides in the cytoplasmic vesicle. The protein localises to the autophagosome membrane. It is found in the golgi apparatus. It localises to the trans-Golgi network membrane. Its subcellular location is the late endosome membrane. The protein resides in the recycling endosome membrane. The protein localises to the endoplasmic reticulum membrane. It is found in the mitochondrion membrane. It carries out the reaction a 1,2-diacyl-sn-glycero-3-phosphocholine(in) = a 1,2-diacyl-sn-glycero-3-phosphocholine(out). The enzyme catalyses a 1,2-diacyl-sn-glycero-3-phospho-L-serine(in) = a 1,2-diacyl-sn-glycero-3-phospho-L-serine(out). The catalysed reaction is a 1,2-diacyl-sn-glycero-3-phosphoethanolamine(in) = a 1,2-diacyl-sn-glycero-3-phosphoethanolamine(out). In terms of biological role, phospholipid scramblase involved in autophagy by mediating autophagosomal membrane expansion. Cycles between the preautophagosomal structure/phagophore assembly site (PAS) and the cytoplasmic vesicle pool and supplies membrane for the growing autophagosome. Lipid scramblase activity plays a key role in preautophagosomal structure/phagophore assembly by distributing the phospholipids that arrive through ATG2 (ATG2A or ATG2B) from the cytoplasmic to the luminal leaflet of the bilayer, thereby driving autophagosomal membrane expansion. Also required to supply phosphatidylinositol 4-phosphate to the autophagosome initiation site by recruiting the phosphatidylinositol 4-kinase beta (PI4KB) in a process dependent on ARFIP2, but not ARFIP1. In addition to autophagy, also plays a role in necrotic cell death. The protein is Autophagy-related protein 9A of Homo sapiens (Human).